A 702-amino-acid polypeptide reads, in one-letter code: Ribosomal RNA large subunit methyltransferase K/L (702 aa).

Residues 43 to 154 (LVYQSLMWSR…KETASIALDL (112 aa)) enclose the THUMP domain.

It belongs to the methyltransferase superfamily. RlmKL family.

The protein localises to the cytoplasm. The enzyme catalyses guanosine(2445) in 23S rRNA + S-adenosyl-L-methionine = N(2)-methylguanosine(2445) in 23S rRNA + S-adenosyl-L-homocysteine + H(+). It catalyses the reaction guanosine(2069) in 23S rRNA + S-adenosyl-L-methionine = N(2)-methylguanosine(2069) in 23S rRNA + S-adenosyl-L-homocysteine + H(+). Specifically methylates the guanine in position 2445 (m2G2445) and the guanine in position 2069 (m7G2069) of 23S rRNA. The chain is Ribosomal RNA large subunit methyltransferase K/L from Shigella boydii serotype 18 (strain CDC 3083-94 / BS512).